Here is a 788-residue protein sequence, read N- to C-terminus: Endonuclease MutS2 (788 aa).

Residue 332-339 participates in ATP binding; it reads GPNTGGKT. Positions 713 to 788 constitute a Smr domain; that stretch reads VDLRGMDAEE…GTGVTVVELK (76 aa).

This sequence belongs to the DNA mismatch repair MutS family. MutS2 subfamily. Homodimer. Binds to stalled ribosomes, contacting rRNA.

In terms of biological role, endonuclease that is involved in the suppression of homologous recombination and thus may have a key role in the control of bacterial genetic diversity. Its function is as follows. Acts as a ribosome collision sensor, splitting the ribosome into its 2 subunits. Detects stalled/collided 70S ribosomes which it binds and splits by an ATP-hydrolysis driven conformational change. Acts upstream of the ribosome quality control system (RQC), a ribosome-associated complex that mediates the extraction of incompletely synthesized nascent chains from stalled ribosomes and their subsequent degradation. Probably generates substrates for RQC. The chain is Endonuclease MutS2 from Clostridium botulinum (strain Okra / Type B1).